Here is a 184-residue protein sequence, read N- to C-terminus: ATP-dependent protease subunit HslV (184 aa).

T11 is an active-site residue. Na(+)-binding residues include A165, C168, and T171.

It belongs to the peptidase T1B family. HslV subfamily. A double ring-shaped homohexamer of HslV is capped on each side by a ring-shaped HslU homohexamer. The assembly of the HslU/HslV complex is dependent on binding of ATP.

Its subcellular location is the cytoplasm. It catalyses the reaction ATP-dependent cleavage of peptide bonds with broad specificity.. Its activity is regulated as follows. Allosterically activated by HslU binding. Protease subunit of a proteasome-like degradation complex believed to be a general protein degrading machinery. The chain is ATP-dependent protease subunit HslV from Zymomonas mobilis subsp. mobilis (strain ATCC 31821 / ZM4 / CP4).